The chain runs to 105 residues: Large ribosomal subunit protein uL24 (105 aa).

This sequence belongs to the universal ribosomal protein uL24 family. Part of the 50S ribosomal subunit.

Functionally, one of two assembly initiator proteins, it binds directly to the 5'-end of the 23S rRNA, where it nucleates assembly of the 50S subunit. One of the proteins that surrounds the polypeptide exit tunnel on the outside of the subunit. The chain is Large ribosomal subunit protein uL24 from Psychrobacter arcticus (strain DSM 17307 / VKM B-2377 / 273-4).